The primary structure comprises 86 residues: Elongation factor 1-beta (86 aa).

Belongs to the EF-1-beta/EF-1-delta family.

Its function is as follows. Promotes the exchange of GDP for GTP in EF-1-alpha/GDP, thus allowing the regeneration of EF-1-alpha/GTP that could then be used to form the ternary complex EF-1-alpha/GTP/AAtRNA. This is Elongation factor 1-beta from Methanocorpusculum labreanum (strain ATCC 43576 / DSM 4855 / Z).